The chain runs to 163 residues: Phosphopantetheine adenylyltransferase (163 aa).

Substrate is bound at residue Ser-9. Residues 9-10 (SF) and His-17 contribute to the ATP site. Lys-41, Val-78, and Arg-92 together coordinate substrate. Residues 93–95 (GLR), Glu-103, and 128–134 (SRPITAT) contribute to the ATP site.

Belongs to the bacterial CoaD family. As to quaternary structure, homohexamer. Mg(2+) serves as cofactor.

It localises to the cytoplasm. It catalyses the reaction (R)-4'-phosphopantetheine + ATP + H(+) = 3'-dephospho-CoA + diphosphate. It participates in cofactor biosynthesis; coenzyme A biosynthesis; CoA from (R)-pantothenate: step 4/5. In terms of biological role, reversibly transfers an adenylyl group from ATP to 4'-phosphopantetheine, yielding dephospho-CoA (dPCoA) and pyrophosphate. This Rhizobium meliloti (strain 1021) (Ensifer meliloti) protein is Phosphopantetheine adenylyltransferase.